A 261-amino-acid polypeptide reads, in one-letter code: Claudin-18 (261 aa).

Residues 1 to 6 (MATTTC) are Cytoplasmic-facing. A helical transmembrane segment spans residues 7 to 27 (QVVGLLLSLLGLAGCIAATGM). Residues 28 to 80 (DMWSTQDLYDNPVTSVFQYEGLWRSCVQQSSGFTECRPYFTILGLPAMLQAVR) lie on the Extracellular side of the membrane. The helical transmembrane segment at 81-101 (ALMIVGIVLGVIGILVSIFAL) threads the bilayer. At 102-122 (KCIRIGSMDDSAKAKMTLTSG) the chain is on the cytoplasmic side. The chain crosses the membrane as a helical span at residues 123 to 143 (IMFIISGVCAIIGVSVFANML). The Extracellular segment spans residues 144 to 173 (VTNFWMSTANMYSGMGGMVQTVQTRYTFGA). Residues 174–194 (ALFVGWIAGGLTLIGGVMMCI) form a helical membrane-spanning segment. Residues 195–261 (ACRGLTPDDR…QSHPTKYDYV (67 aa)) lie on the Cytoplasmic side of the membrane. The segment at 195–261 (ACRGLTPDDR…QSHPTKYDYV (67 aa)) is required for role in regulation of RANKL-induced osteoclast differentiation. Ser-214 carries the phosphoserine modification. A disordered region spans residues 242–261 (DGGARTEDDEQSHPTKYDYV).

This sequence belongs to the claudin family. Interacts with TJP2/ZO-2. Interacts with TJP1/ZO-1. Interacts with YAP1 (phosphorylated); the interaction sequesters YAP1 away from the nucleus and thereby restricts transcription of YAP1 target genes. Interacts with CLDN19. As to expression, expressed in the lung (at protein level).

Its subcellular location is the cell junction. The protein localises to the tight junction. It is found in the cell membrane. Its function is as follows. Involved in alveolar fluid homeostasis via regulation of alveolar epithelial tight junction composition and therefore ion transport and solute permeability, potentially via downstream regulation of the actin cytoskeleton organization and beta-2-adrenergic signaling. Required for lung alveolarization and maintenance of the paracellular alveolar epithelial barrier. Acts to maintain epithelial progenitor cell proliferation and organ size, via regulation of YAP1 localization away from the nucleus and thereby restriction of YAP1 target gene transcription. Acts as a negative regulator of RANKL-induced osteoclast differentiation, potentially via relocation of TJP2/ZO-2 away from the nucleus, subsequently involved in bone resorption in response to calcium deficiency. Mediates the osteoprotective effects of estrogen, potentially via acting downstream of estrogen signaling independently of RANKL signaling pathways. Functionally, required for the formation of the gastric paracellular barrier via its role in tight junction formation, thereby involved in the response to gastric acidification. This Rattus norvegicus (Rat) protein is Claudin-18.